Here is an 87-residue protein sequence, read N- to C-terminus: Small ribosomal subunit protein uS17 (87 aa).

This sequence belongs to the universal ribosomal protein uS17 family. In terms of assembly, part of the 30S ribosomal subunit.

One of the primary rRNA binding proteins, it binds specifically to the 5'-end of 16S ribosomal RNA. The protein is Small ribosomal subunit protein uS17 of Neisseria meningitidis serogroup C (strain 053442).